The following is a 525-amino-acid chain: MRLAFWLYEGTALHGISRVTNSMKGVHTVYHAPQGDDYITATYTMLERTPEFPALSISVVRGRDLAQGVSRLPATLQQVEEHYHPELSVIAPSCSTALLQEDLHQLAAQSGVPQDKLMVYAVNPFRVTENEAADGLLTALVKRYAAEGPKTAAPTVNLLGFTSLGFHLKANLTSIRRLLTTLGVKVNVVAPWGAGIADLKRLPEAWLTIAPFREIGQTAAAYLEETFGVPTEYGTPLGVEPTLRWLRAVIEKLNTVGAKEGATPIAMPELHAFSLDGMSAPSGVPWFARTADMESFSNKKAFVFGDATTTVAMVKFLRDELGMQIIGAGTYLERHADWVRKELDGYLPGALMVTERFQDVAQVIEDEMPDLVCGTQMERHSCRKLDVPCMVVCPPTHIENHLLGYYPFLGFDGADVIADRVYISCKLGLEKHLIDFFGDAGLEYEEPSASSENGSAPLSAGTATPAAAPEEGGMAWTDEAETMLKKVPFFVRKKVRKNTENFAEENGESRVSVEVFRRAKESLGG.

[4Fe-4S] cluster is bound at residue Asp36. Asp292 acts as the Proton donor in catalysis. 428–429 contacts substrate; it reads GL. Positions 447–470 are disordered; the sequence is PSASSENGSAPLSAGTATPAAAPE. Residues 460 to 470 show a composition bias toward low complexity; the sequence is AGTATPAAAPE.

It belongs to the ChlB/BchB/BchZ family. In terms of assembly, protochlorophyllide reductase is composed of three subunits; BchL, BchN and BchB. Forms a heterotetramer of two BchB and two BchN subunits. [4Fe-4S] cluster is required as a cofactor.

The enzyme catalyses chlorophyllide a + oxidized 2[4Fe-4S]-[ferredoxin] + 2 ADP + 2 phosphate = protochlorophyllide a + reduced 2[4Fe-4S]-[ferredoxin] + 2 ATP + 2 H2O. It functions in the pathway porphyrin-containing compound metabolism; bacteriochlorophyll biosynthesis (light-independent). In terms of biological role, component of the dark-operative protochlorophyllide reductase (DPOR) that uses Mg-ATP and reduced ferredoxin to reduce ring D of protochlorophyllide (Pchlide) to form chlorophyllide a (Chlide). This reaction is light-independent. The NB-protein (BchN-BchB) is the catalytic component of the complex. This Chlorobium luteolum (strain DSM 273 / BCRC 81028 / 2530) (Pelodictyon luteolum) protein is Light-independent protochlorophyllide reductase subunit B.